A 415-amino-acid chain; its full sequence is Citrate (Re)-synthase (415 aa).

The 272-residue stretch at 4 to 275 (IFIIDVTNRD…GHEVDLSKAW (272 aa)) folds into the Pyruvate carboxyltransferase domain.

The protein belongs to the alpha-IPM synthase/homocitrate synthase family. Requires Mn(2+) as cofactor.

It carries out the reaction oxaloacetate + acetyl-CoA + H2O = citrate + CoA + H(+). Its activity is regulated as follows. Inhibited by citrate and under aerobic conditions. Catalyzes the condensation of the acetyl group of acetyl coenzyme A (acetyl-CoA) with oxaloacetate to form citrate. This enzyme is highly Re-face stereospecific with respect to the C-2 of oxaloacetate. The protein is Citrate (Re)-synthase of Dehalococcoides mccartyi (strain CBDB1).